Here is a 62-residue protein sequence, read N- to C-terminus: UPF0434 protein ABO_2103 (62 aa).

Belongs to the UPF0434 family.

The chain is UPF0434 protein ABO_2103 from Alcanivorax borkumensis (strain ATCC 700651 / DSM 11573 / NCIMB 13689 / SK2).